The primary structure comprises 950 residues: UvrABC system protein A (950 aa).

36-43 (GKSGSGKS) lines the ATP pocket. The C4-type zinc finger occupies 260–287 (CPLCGFSLPLIEPRLFSFNSPFGACSEC). ABC transporter domains lie at 317 to 599 (FKTS…KNSL) and 619 to 947 (ADKG…MFLK). Residue 651–658 (GVSGSGKS) coordinates ATP. Residues 750-776 (CEKCQGDGYLNIQMHFLPDVFVPCDLC) form a C4-type zinc finger.

It belongs to the ABC transporter superfamily. UvrA family. In terms of assembly, forms a heterotetramer with UvrB during the search for lesions.

The protein localises to the cytoplasm. The UvrABC repair system catalyzes the recognition and processing of DNA lesions. UvrA is an ATPase and a DNA-binding protein. A damage recognition complex composed of 2 UvrA and 2 UvrB subunits scans DNA for abnormalities. When the presence of a lesion has been verified by UvrB, the UvrA molecules dissociate. In Borreliella burgdorferi (strain ATCC 35210 / DSM 4680 / CIP 102532 / B31) (Borrelia burgdorferi), this protein is UvrABC system protein A.